We begin with the raw amino-acid sequence, 361 residues long: MKTFPLQSLTIIEAQQKQFALVDSICRHFPGSEFLTGGDLGLTPGLNQPRVTQRVEQVLADAFHAQAAALVQGAGTGAIRAGLAALLKPGQRLLVHDAPVYPTTRVIIEQMGLTLITVDFNDLSALKQVVDEQQPDAALVQHTRQQPQDSYVLADVLATLRAAGVPALTDDNYAVMKVARIGCECGANVSTFSCFKLFGPEGVGAVVGDADVINRIRATLYSGGSQIQGAQALEVLRGLVFAPVMHAVQAGVSERLLALLNGGAVPEVKSAVIANAQSKVLIVEFHQPIAARVLEEAQKRGALPYPVGAESKYEIPPLFYRLSGTFRQANPQSEHCAIRINPNRSGEETVLRILRESIASI.

This is an uncharacterized protein from Escherichia coli (strain K12).